The primary structure comprises 430 residues: Small ribosomal subunit protein uS9m (430 aa).

The N-terminal 34 residues, 1-34 (MLSRLFLRHSNLRFVTLVSSKSNSQIFSSFIRPL), are a transit peptide targeting the mitochondrion. Residues 32 to 97 (RPLSTNSSGG…GGEGKWPEEP (66 aa)) form a disordered region. The segment covering 39–48 (SGGGGNGDGN) has biased composition (gly residues). Low complexity predominate over residues 68–79 (GPFSSDDSFGSS). Residues 80-91 (GVAGSGLPGGEG) are compositionally biased toward gly residues.

The protein belongs to the universal ribosomal protein uS9 family. As to quaternary structure, interacts (via C terminus) with PIA2. Component of the mitochondrial ribosome small subunit. Expressed in root tips, young leaves, flowers and siliques.

Its subcellular location is the mitochondrion. In terms of biological role, mitochondrial ribosomal protein required for central cell maturation. May work together with PIA2 in controlling female gametophyte development, possibly by regulating the expression of some mitochondrial proteins. This is Small ribosomal subunit protein uS9m from Arabidopsis thaliana (Mouse-ear cress).